A 172-amino-acid polypeptide reads, in one-letter code: Protein-export protein SecB (172 aa).

Positions 152–172 are disordered; it reads AQGAEGGNSGIVMPDGSQARH.

It belongs to the SecB family. In terms of assembly, homotetramer, a dimer of dimers. One homotetramer interacts with 1 SecA dimer.

Its subcellular location is the cytoplasm. One of the proteins required for the normal export of preproteins out of the cell cytoplasm. It is a molecular chaperone that binds to a subset of precursor proteins, maintaining them in a translocation-competent state. It also specifically binds to its receptor SecA. This Cupriavidus taiwanensis (strain DSM 17343 / BCRC 17206 / CCUG 44338 / CIP 107171 / LMG 19424 / R1) (Ralstonia taiwanensis (strain LMG 19424)) protein is Protein-export protein SecB.